A 281-amino-acid polypeptide reads, in one-letter code: Putative E3 ubiquitin-protein ligase SINA-like 6 (281 aa).

The interval 1 to 26 is disordered; it reads MVGVLLSERNGSQKRHCSSISSDDGR. The RING-type zinc finger occupies 45–81; that stretch reads CPICYQALKIPVFQCGNGHLACSSCCPKLRNKCPACA. An SBD region spans residues 95 to 280; it reads VLESVLVPCR…MMLCINELKQ (186 aa). An SIAH-type zinc finger spans residues 98–156; sequence SVLVPCRYADLGCTKTIYYGRESTHEKICNFSPCSCPVQGCNYTGSYKDLYEHYDLTHS. Cys103, Cys110, His122, Cys126, Cys133, Cys138, His150, and His155 together coordinate Zn(2+).

It belongs to the SINA (Seven in absentia) family.

It catalyses the reaction S-ubiquitinyl-[E2 ubiquitin-conjugating enzyme]-L-cysteine + [acceptor protein]-L-lysine = [E2 ubiquitin-conjugating enzyme]-L-cysteine + N(6)-ubiquitinyl-[acceptor protein]-L-lysine.. The protein operates within protein modification; protein ubiquitination. In terms of biological role, E3 ubiquitin-protein ligase that mediates ubiquitination and subsequent proteasomal degradation of target proteins. E3 ubiquitin ligases accept ubiquitin from an E2 ubiquitin-conjugating enzyme in the form of a thioester and then directly transfers the ubiquitin to targeted substrates. It probably triggers the ubiquitin-mediated degradation of different substrates. The polypeptide is Putative E3 ubiquitin-protein ligase SINA-like 6 (Arabidopsis thaliana (Mouse-ear cress)).